The sequence spans 417 residues: MAP kinase-interacting serine/threonine-protein kinase 1 (417 aa).

The interval 1-20 (MVSSQPVPIDDGGKRRKKKR) is disordered. A Protein kinase domain is found at 37-321 (RLTDELLGEG…AAQVLQHPWL (285 aa)). ATP contacts are provided by residues 43–51 (LGEGAYAKV) and lysine 66. Aspartate 158 functions as the Proton acceptor in the catalytic mechanism. The tract at residues 397 to 417 (AHARKGGSHLTHTTVTSQGAT) is disordered. Over residues 406-417 (LTHTTVTSQGAT) the composition is skewed to polar residues.

Belongs to the protein kinase superfamily. CAMK Ser/Thr protein kinase family. The cofactor is Mg(2+).

It catalyses the reaction L-seryl-[protein] + ATP = O-phospho-L-seryl-[protein] + ADP + H(+). The catalysed reaction is L-threonyl-[protein] + ATP = O-phospho-L-threonyl-[protein] + ADP + H(+). In terms of biological role, may play a role in the response to environmental stress and cytokines. Appears to regulate translation by phosphorylating EIF4E, thus increasing the affinity of this protein for the 7-methylguanosine-containing mRNA cap. This Xenopus tropicalis (Western clawed frog) protein is MAP kinase-interacting serine/threonine-protein kinase 1 (mknk1).